The following is a 282-amino-acid chain: tRNA (guanine-N(1)-)-methyltransferase (282 aa).

Positions 77–114 (TGPAATVSDLESSAEHKRNLRPATTNGDAEPLGEKAGG) are disordered. S-adenosyl-L-methionine is bound by residues glycine 149 and 173-178 (IGDYVL).

Belongs to the RNA methyltransferase TrmD family. In terms of assembly, homodimer.

Its subcellular location is the cytoplasm. It carries out the reaction guanosine(37) in tRNA + S-adenosyl-L-methionine = N(1)-methylguanosine(37) in tRNA + S-adenosyl-L-homocysteine + H(+). Its function is as follows. Specifically methylates guanosine-37 in various tRNAs. This Corynebacterium jeikeium (strain K411) protein is tRNA (guanine-N(1)-)-methyltransferase.